The primary structure comprises 128 residues: MILLAFSGELFKRINTSPIVHVERRTNPTTTVTVTTKPSPTPISPNQCNTNKIQCCNSVQSSDAPLLTGLLGLLGIVLQGVIPIGVTCSPISVIGIGGNSCSAQTVCCENNTFNGVIAIGCTPINIDL.

4 disulfides stabilise this stretch: C48/C107, C55/C101, C56/C88, and C108/C121. A glycan (N-linked (GlcNAc...) asparagine) is linked at N110.

Belongs to the fungal hydrophobin family. In terms of assembly, self-assembles to form functional amyloid fibrils called rodlets. Self-assembly into fibrillar rodlets occurs spontaneously at hydrophobic:hydrophilic interfaces and the rodlets further associate laterally to form amphipathic monolayers.

It localises to the secreted. The protein localises to the cell wall. Functionally, aerial growth, conidiation, and dispersal of filamentous fungi in the environment rely upon a capability of their secreting small amphipathic proteins called hydrophobins (HPBs) with low sequence identity. Class I can self-assemble into an outermost layer of rodlet bundles on aerial cell surfaces, conferring cellular hydrophobicity that supports fungal growth, development and dispersal; whereas Class II form highly ordered films at water-air interfaces through intermolecular interactions but contribute nothing to the rodlet structure. The chain is Class I hydrophobin 19 from Pleurotus ostreatus (strain PC15) (Oyster mushroom).